The following is a 48-amino-acid chain: Large ribosomal subunit protein bL33B (48 aa).

It belongs to the bacterial ribosomal protein bL33 family.

This Streptococcus thermophilus (strain CNRZ 1066) protein is Large ribosomal subunit protein bL33B.